The chain runs to 535 residues: MALAFDEFGRPFIILREQDQKTRLRGIDAQKANIAAGKAVARILRSSLGPKGMDKMLQGPDGDITITNDGATILEQMDVDNQIAKLMVELSRSQDYEIGDGTTGVVVMAGALLEQAERQLDRGIHPIRIAEGYEMASRVAVEHLERIAQKFEFDVNNYEPLVQTCMTTLSSKIVNRCKRSLAEIAVKAVLAVADLERRDVNLDLIKVEGKVGGKLEDTELIYGILIDKDMSHPQMPKQIEDAHIAILTCPFEPPKPKTKHKVDIDTVEKFETLRKQEQQYFDEMVQKCKDVGATLVICQWGFDDEANHLLMHRNLPAVRWVGGVELELIAIATGGRIVPRFQELTPEKLGKAGVVREKSFGTTKERMLYIEHCANSKAVTVFIRGGNKMMIEETKRSIHDALCVARNLIRNKSIVYGGGAAEIACSLAVDAAADKYPGVEQYAIRAFAEALDSVPMALAENSGLQPIETLSAVKSQQIKENIPFYGIDCNDVGTNDMREQNVFETLIGKQQQILLATQVVKMILKIDDVISNSEY.

The protein belongs to the TCP-1 chaperonin family. In terms of assembly, heterooligomeric complex of about 850 to 900 kDa that forms two stacked rings, 12 to 16 nm in diameter.

Its subcellular location is the cytoplasm. In terms of biological role, molecular chaperone; assists the folding of proteins upon ATP hydrolysis. Known to play a role, in vitro, in the folding of actin and tubulin. The polypeptide is T-complex protein 1 subunit epsilon (Arabidopsis thaliana (Mouse-ear cress)).